Here is a 457-residue protein sequence, read N- to C-terminus: Adenylosuccinate synthetase isozyme 1 (457 aa).

The interval 1–21 (MSGTRASNDRPPGAGGVKRGR) is disordered. GTP contacts are provided by residues 42-48 (GDEGKGK) and 70-72 (GHT). The Proton acceptor role is filled by Asp43. Mg(2+) contacts are provided by Asp43 and Gly70. Asp43 is a substrate binding site. IMP-binding positions include 43 to 46 (DEGK), 68 to 71 (NAGH), Thr163, Arg177, Asn256, Thr271, and Arg335. His71 acts as the Proton donor in catalysis. Residue 331 to 337 (VTTGRKR) coordinates substrate. GTP contacts are provided by residues Arg337, 363-365 (KLD), and 445-448 (GVGK).

This sequence belongs to the adenylosuccinate synthetase family. As to quaternary structure, homodimer. The cofactor is Mg(2+). In terms of tissue distribution, predominantly expressed in skeletal muscle and heart, as well as in several hematopoietic cell lines and solid tumors.

The protein resides in the cytoplasm. It catalyses the reaction IMP + L-aspartate + GTP = N(6)-(1,2-dicarboxyethyl)-AMP + GDP + phosphate + 2 H(+). It functions in the pathway purine metabolism; AMP biosynthesis via de novo pathway; AMP from IMP: step 1/2. In terms of biological role, component of the purine nucleotide cycle (PNC), which interconverts IMP and AMP to regulate the nucleotide levels in various tissues, and which contributes to glycolysis and ammoniagenesis. Catalyzes the first committed step in the biosynthesis of AMP from IMP. This Homo sapiens (Human) protein is Adenylosuccinate synthetase isozyme 1.